Consider the following 235-residue polypeptide: Orotidine 5'-phosphate decarboxylase (235 aa).

Substrate contacts are provided by residues aspartate 12, lysine 34, 61–70 (DMKLLDIDNT), threonine 116, arginine 177, glutamine 186, glycine 206, and arginine 207. Lysine 63 serves as the catalytic Proton donor.

This sequence belongs to the OMP decarboxylase family. Type 1 subfamily. As to quaternary structure, homodimer.

It catalyses the reaction orotidine 5'-phosphate + H(+) = UMP + CO2. It participates in pyrimidine metabolism; UMP biosynthesis via de novo pathway; UMP from orotate: step 2/2. Catalyzes the decarboxylation of orotidine 5'-monophosphate (OMP) to uridine 5'-monophosphate (UMP). The sequence is that of Orotidine 5'-phosphate decarboxylase from Rhizobium etli (strain ATCC 51251 / DSM 11541 / JCM 21823 / NBRC 15573 / CFN 42).